A 134-amino-acid chain; its full sequence is Large ribosomal subunit protein bL17 (134 aa).

The protein belongs to the bacterial ribosomal protein bL17 family. Part of the 50S ribosomal subunit. Contacts protein L32.

The protein is Large ribosomal subunit protein bL17 of Colwellia psychrerythraea (strain 34H / ATCC BAA-681) (Vibrio psychroerythus).